The primary structure comprises 210 residues: Scoloptoxin SSD558 (210 aa).

The first 23 residues, 1–23 (MNILLPSTLFVLLMFQIIGSGMG), serve as a signal peptide directing secretion.

Contains 3 disulfide bonds. In terms of tissue distribution, expressed by the venom gland.

The protein localises to the secreted. The polypeptide is Scoloptoxin SSD558 (Scolopendra dehaani (Thai centipede)).